The following is a 70-amino-acid chain: Waprin-Thr1 (70 aa).

Positions 1–19 (MKARLLLLSVVILVGMVSA) are cleaved as a signal peptide. The region spanning 20–70 (ENEKAGSCPDVNQPIPPLGLCRNMCESDSGCPNNEKCCKNGCGFMTCSRPR) is the WAP domain. Disulfide bonds link Cys-27-Cys-57, Cys-40-Cys-61, Cys-44-Cys-56, and Cys-50-Cys-66.

Belongs to the venom waprin family. In terms of tissue distribution, expressed by the venom gland.

It is found in the secreted. Its function is as follows. Damages membranes of susceptible bacteria. Has no hemolytic activity. Not toxic to mice. Does not inhibit the proteinases elastase and cathepsin G. The protein is Waprin-Thr1 of Thrasops jacksonii (Jackson's black tree snake).